A 154-amino-acid polypeptide reads, in one-letter code: 17.0 kDa class II heat shock protein (154 aa).

In terms of domain architecture, sHSP spans 39–154 (DARAMAATPA…KPKTIEIKVA (116 aa)).

Belongs to the small heat shock protein (HSP20) family.

The protein localises to the cytoplasm. The chain is 17.0 kDa class II heat shock protein (HSP18) from Zea mays (Maize).